The chain runs to 325 residues: MITDRQLSILNAIVEDYVDFGQPVGSKTLIERHNLNVSPATIRNEMKQLEDLNYIEKTHSSSGRSPSQLGFRYYVNRLLEQTSHQKTNKLRRLNQLLVENQYDVSSALTYFADELSNISQYTTLVVHPNHKQDIINNVHLIRANPNLVIMVIVFSSGHVEHVHLASDIPFNNDKLNTISNFVTNKLTEFNQNLQDDIVSFVQSEQEEIFINKLLNTMNNHISNQSNSIYMGGKVKLIDALNESNVSSIQPILQYIESNRIAELLQDISSPNINVKIGNEIDDSLSDISIVTSQYHFDETLKGQIAVIGPTAMHYQNVIQLLNRIW.

This sequence belongs to the HrcA family.

In terms of biological role, negative regulator of class I heat shock genes (grpE-dnaK-dnaJ and groELS operons). Prevents heat-shock induction of these operons. This Staphylococcus aureus (strain USA300) protein is Heat-inducible transcription repressor HrcA.